Here is a 229-residue protein sequence, read N- to C-terminus: Heptaprenylglyceryl phosphate synthase (229 aa).

K12 is a sn-glycerol 1-phosphate binding site. Mg(2+) is bound by residues D14 and S40. Sn-glycerol 1-phosphate is bound by residues 159–164, G189, and 209–210; these read YLEYSG and GN.

It belongs to the GGGP/HepGP synthase family. Group I subfamily. Homodimer. Mg(2+) is required as a cofactor.

It carries out the reaction sn-glycerol 1-phosphate + all-trans-heptaprenyl diphosphate = 3-heptaprenyl-sn-glycero-1-phosphate + diphosphate. The protein operates within membrane lipid metabolism; glycerophospholipid metabolism. In terms of biological role, prenyltransferase that catalyzes in vivo the transfer of the heptaprenyl moiety of heptaprenyl pyrophosphate (HepPP; 35 carbon atoms) to the C3 hydroxyl of sn-glycerol-1-phosphate (G1P), producing heptaprenylglyceryl phosphate (HepGP). This reaction is an ether-bond-formation step in the biosynthesis of archaea-type G1P-based membrane lipids found in Bacillales. The protein is Heptaprenylglyceryl phosphate synthase of Bacillus anthracis (strain A0248).